The primary structure comprises 47 residues: Delta-actitoxin-Axm1d (47 aa).

3 disulfide bridges follow: cysteine 4–cysteine 44, cysteine 6–cysteine 34, and cysteine 27–cysteine 45.

This sequence belongs to the sea anemone sodium channel inhibitory toxin family. Type I subfamily.

It localises to the secreted. The protein resides in the nematocyst. Binds specifically to voltage-gated sodium channels (Nav), thereby delaying their inactivation during signal transduction. Thus it strongly stimulates mammalian cardiac muscle contraction. The sequence is that of Delta-actitoxin-Axm1d from Anthopleura xanthogrammica (Giant green sea anemone).